Reading from the N-terminus, the 908-residue chain is Glutamate receptor ionotropic, kainate 2 (908 aa).

Positions 1 to 31 are cleaved as a signal peptide; that stretch reads MKIISPVLSNLVFSRSIKVLLCLLWIGYSQG. Over 32-561 the chain is Extracellular; sequence TTHVLRFGGI…VFSFLNPLSP (530 aa). 7 N-linked (GlcNAc...) asparagine glycosylation sites follow: Asn-67, Asn-73, Asn-275, Asn-378, Asn-412, Asn-423, and Asn-430. An intrachain disulfide couples Cys-96 to Cys-347. Positions 516, 518, and 523 each coordinate L-glutamate. A glycan (N-linked (GlcNAc...) asparagine) is linked at Asn-546. The chain crosses the membrane as a helical span at residues 562–582; sequence DIWMYILLAYLGVSCVLFVIA. Topologically, residues 583-638 are cytoplasmic; it reads RFSPYEWYNPHPCNPDSDVVENNFTLLNSFWFGVGALMQQGSELMPKALSTRIVGG. A helical transmembrane segment spans residues 639–659; sequence IWWFFTLIIISSYTANLAAFL. Residues 660–819 lie on the Extracellular side of the membrane; the sequence is TVERMESPID…KEASALGVQN (160 aa). 3 residues coordinate L-glutamate: Ala-689, Thr-690, and Glu-738. Residues Cys-750 and Cys-804 are joined by a disulfide bond. N-linked (GlcNAc...) asparagine glycosylation occurs at Asn-751. Residues 820–840 form a helical membrane-spanning segment; that stretch reads IGGIFIVLAAGLVLSVFVAVG. Over 841 to 908 the chain is Cytoplasmic; the sequence is EFLYKSKKNA…RRLPGKETMA (68 aa). Residues Ser-846 and Ser-868 each carry the phosphoserine; by PKC modification. A Glycyl lysine isopeptide (Lys-Gly) (interchain with G-Cter in SUMO1) cross-link involves residue Lys-886.

The protein belongs to the glutamate-gated ion channel (TC 1.A.10.1) family. GRIK2 subfamily. As to quaternary structure, homotetramer and heterotetramer with GRIK5. Tetramers may be formed by the dimerization of dimers. Assembles into a kainate-gated homomeric channel that does not bind AMPA. Can form functional heteromeric receptors with GRIK4 and GRIK5. Can form functional heteromeric receptors with GRIK3. Interacts with DLG4. Interacts with NETO2. Interacts (via C-terminus) with KLHL17 (via kelch repeats); the interaction targets GRIK2 for degradation via ubiquitin-proteasome pathway. Post-translationally, sumoylation mediates kainate receptor-mediated endocytosis and regulates synaptic transmission. Sumoylation is enhanced by PIAS3 and desumoylated by SENP1. Ubiquitinated. Ubiquitination regulates the GRIK2 levels at the synapse by leading kainate receptor degradation through proteasome. In terms of processing, phosphorylated by PKC at Ser-868 upon agonist activation, this directly enhance sumoylation. In terms of tissue distribution, highest expression is found in the olfactory lobe, piriform cortex, dentate gyrus, hippocampus, granular cell layer of the cerebellum, and in caudate-putamen.

Its subcellular location is the cell membrane. It is found in the postsynaptic cell membrane. It catalyses the reaction Ca(2+)(in) = Ca(2+)(out). The enzyme catalyses Na(+)(in) = Na(+)(out). Cold receptor activity activated by temperatures between 10-19 degrees Celsius. Ionotropic glutamate receptor that functions as a cation-permeable ligand-gated ion channel, gated by L-glutamate and the glutamatergic agonist kainic acid. L-glutamate acts as an excitatory neurotransmitter at many synapses in the central nervous system. Binding of the excitatory neurotransmitter L-glutamate induces a conformation change, leading to the opening of the cation channel, and thereby converts the chemical signal to an electrical impulse. The receptor then desensitizes rapidly and enters a transient inactive state, characterized by the presence of bound agonist. Modulates cell surface expression of NETO2. In association with GRIK3, involved in presynaptic facilitation of glutamate release at hippocampal mossy fiber synapses. In terms of biological role, independent of its ionotropic glutamate receptor activity, acts as a thermoreceptor conferring sensitivity to cold temperatures. Functions in dorsal root ganglion neurons. The sequence is that of Glutamate receptor ionotropic, kainate 2 (Grik2) from Rattus norvegicus (Rat).